A 520-amino-acid polypeptide reads, in one-letter code: Peptide chain release factor 3 (520 aa).

Residues 8–277 (ESRKTFAIIS…FAPMPNARQT (270 aa)) form the tr-type G domain. GTP is bound by residues 17–24 (SHPDAGKT), 85–89 (DTPGH), and 139–142 (NKLD).

Belongs to the TRAFAC class translation factor GTPase superfamily. Classic translation factor GTPase family. PrfC subfamily.

It localises to the cytoplasm. Functionally, increases the formation of ribosomal termination complexes and stimulates activities of RF-1 and RF-2. It binds guanine nucleotides and has strong preference for UGA stop codons. It may interact directly with the ribosome. The stimulation of RF-1 and RF-2 is significantly reduced by GTP and GDP, but not by GMP. This is Peptide chain release factor 3 from Staphylococcus aureus (strain JH1).